We begin with the raw amino-acid sequence, 429 residues long: Protein AST1 (429 aa).

In terms of assembly, interacts with PMA1.

It localises to the cell membrane. Its subcellular location is the membrane raft. The protein localises to the golgi apparatus membrane. It is found in the late endosome membrane. Lipid raft-associated protein involved in the targeting of PMA1 from Golgi to the plasma membrane. May induce clustering of PMA1, which facilitates partition of PMA1 into lipid rafts after leaving the ER and its transport to the cell surface. In Saccharomyces cerevisiae (strain ATCC 204508 / S288c) (Baker's yeast), this protein is Protein AST1.